The primary structure comprises 311 residues: Formyltransferase/hydrolase complex subunit D (311 aa).

The protein belongs to the FTR family. In terms of assembly, homotetramer. Octaheteromer. Part of the formyltransferase/hydrolase complex fhc; composed of FhcA, FhcB, FhcC and FhcD.

The protein resides in the cytoplasm. It carries out the reaction N-formylmethanofuran + 5,6,7,8-tetrahydromethanopterin + H(+) = N(5)-formyl-5,6,7,8-tetrahydromethanopterin + methanofuran. Its pathway is one-carbon metabolism; formaldehyde degradation; formate from formaldehyde (H(4)MPT route): step 4/5. Involved in the transformation of 5-formyl tetrahydromethanopterin (5-formyl-H(4)MPT) to methanofuran (MFR) and formate via the intermediate formylmethanofuran (formyl-MFR). Catalyzes the transfer of a formyl group from 5-formyl-H(4)MPT to MFR to produce tetrahydromethanopterin (H(4)MPT) and formyl-MFR, which is then hydrolyzed to formate and MFR. The protein is Formyltransferase/hydrolase complex subunit D of Methylorubrum extorquens (strain ATCC 14718 / DSM 1338 / JCM 2805 / NCIMB 9133 / AM1) (Methylobacterium extorquens).